The chain runs to 71 residues: Small ribosomal subunit protein bS21 (71 aa).

This sequence belongs to the bacterial ribosomal protein bS21 family.

This is Small ribosomal subunit protein bS21 from Wigglesworthia glossinidia brevipalpis.